A 245-amino-acid chain; its full sequence is Adenosylcobinamide-GDP ribazoletransferase (245 aa).

Helical transmembrane passes span F31–A51, P61–L81, V113–L133, A138–T158, and L192–L212.

The protein belongs to the CobS family. Mg(2+) serves as cofactor.

It is found in the cell inner membrane. The enzyme catalyses alpha-ribazole + adenosylcob(III)inamide-GDP = adenosylcob(III)alamin + GMP + H(+). It carries out the reaction alpha-ribazole 5'-phosphate + adenosylcob(III)inamide-GDP = adenosylcob(III)alamin 5'-phosphate + GMP + H(+). The protein operates within cofactor biosynthesis; adenosylcobalamin biosynthesis; adenosylcobalamin from cob(II)yrinate a,c-diamide: step 7/7. Its function is as follows. Joins adenosylcobinamide-GDP and alpha-ribazole to generate adenosylcobalamin (Ado-cobalamin). Also synthesizes adenosylcobalamin 5'-phosphate from adenosylcobinamide-GDP and alpha-ribazole 5'-phosphate. The protein is Adenosylcobinamide-GDP ribazoletransferase of Pseudomonas aeruginosa (strain ATCC 15692 / DSM 22644 / CIP 104116 / JCM 14847 / LMG 12228 / 1C / PRS 101 / PAO1).